Reading from the N-terminus, the 872-residue chain is Serine/threonine-protein phosphatase 1 regulatory subunit 10 (872 aa).

An interaction with TOX4 region spans residues Met-1–Asp-348. Positions Lys-73–Gln-147 constitute a TFIIS N-terminal domain. Disordered stretches follow at residues Gln-147–Leu-213, Ser-247–Pro-270, Lys-307–Thr-398, and Val-534–Asp-837. Composition is skewed to basic and acidic residues over residues Ala-153–Ser-166 and Pro-174–Lys-196. Residue Lys-179 forms a Glycyl lysine isopeptide (Lys-Gly) (interchain with G-Cter in SUMO2) linkage. Residues Ala-248 to Pro-258 show a composition bias toward low complexity. A Glycyl lysine isopeptide (Lys-Gly) (interchain with G-Cter in SUMO2) cross-link involves residue Lys-262. A Phosphoserine modification is found at Ser-313. The span at Lys-325 to Ser-336 shows a compositional bias: low complexity. Residues Pro-357–Ala-433 are necessary for interaction with PPP1CA. Ser-382 carries the phosphoserine modification. Residues Gly-393–Arg-408 form a necessary for interaction with PPP1CC region. Positions Arg-394–Val-423 match the PP1-binding motif motif. Thr-398 is modified (phosphothreonine; by PKA). The interaction with WDR82 stretch occupies residues Thr-418–Leu-619. Residues Gly-540–Gly-551 are compositionally biased toward gly residues. Phosphoserine occurs at positions 545 and 591. The span at Glu-583–His-595 shows a compositional bias: polar residues. A compositionally biased stretch (basic and acidic residues) spans Pro-596–Lys-611. Pro residues predominate over residues Pro-644–His-655. The residue at position 665 (Arg-665) is an Omega-N-methylarginine. Residues Arg-674–Gly-690 are compositionally biased toward low complexity. Omega-N-methylarginine is present on residues Arg-693 and Arg-737. Positions Ala-724–Gly-762 are enriched in gly residues. Positions Pro-795–Gly-835 are enriched in basic and acidic residues. The C3H1-type zinc finger occupies Met-838–Val-866.

As to quaternary structure, component of the PNUTS-PP1 complex (also named PTW/PP1 complex), composed of PPP1R10/PNUTS, TOX4, WDR82, and PPP1CA (or PPP1CB or PPP1CC). Phosphorylated on Thr-398 by PKA within the region necessary for interaction with PPP1CA. As to expression, expressed in testis, brain and intestine (at protein level). Highly expressed in testis.

The protein resides in the nucleus. The protein localises to the chromosome. Substrate-recognition component of the PNUTS-PP1 protein phosphatase complex, a protein phosphatase 1 (PP1) complex that promotes RNA polymerase II transcription pause-release, allowing transcription elongation. Promoter-proximal pausing by RNA polymerase II is a transcription halt following transcription initiation but prior to elongation, which acts as a checkpoint to control that transcripts are favorably configured for transcriptional elongation. The PNUTS-PP1 complex mediates the release of RNA polymerase II from promoter-proximal region of genes by catalyzing dephosphorylation of proteins involved in transcription, such as AFF4, CDK9, MEPCE, INTS12, NCBP1, POLR2M/GDOWN1 and SUPT6H. The PNUTS-PP1 complex also regulates RNA polymerase II transcription termination by mediating dephosphorylation of SUPT5H in termination zones downstream of poly(A) sites, thereby promoting deceleration of RNA polymerase II transcription. PNUTS-PP1 complex is also involved in the response to replication stress by mediating dephosphorylation of POLR2A at 'Ser-5' of the CTD, promoting RNA polymerase II degradation. The PNUTS-PP1 complex also plays a role in the control of chromatin structure and cell cycle progression during the transition from mitosis into interphase. PNUTS-PP1 complex mediates dephosphorylation of MYC, promoting MYC stability by preventing MYC ubiquitination by the SCF(FBXW7) complex. In addition to acts as a substrate-recognition component, PPP1R10/PNUTS also acts as a nuclear targeting subunit for the PNUTS-PP1 complex. In some context, PPP1R10/PNUTS also acts as an inhibitor of protein phosphatase 1 (PP1) activity by preventing access to substrates. In Rattus norvegicus (Rat), this protein is Serine/threonine-protein phosphatase 1 regulatory subunit 10.